A 401-amino-acid chain; its full sequence is Nicotinate phosphoribosyltransferase (401 aa).

His-224 carries the post-translational modification Phosphohistidine; by autocatalysis.

This sequence belongs to the NAPRTase family. Post-translationally, transiently phosphorylated on a His residue during the reaction cycle. Phosphorylation strongly increases the affinity for substrates and increases the rate of nicotinate D-ribonucleotide production. Dephosphorylation regenerates the low-affinity form of the enzyme, leading to product release.

The catalysed reaction is nicotinate + 5-phospho-alpha-D-ribose 1-diphosphate + ATP + H2O = nicotinate beta-D-ribonucleotide + ADP + phosphate + diphosphate. It participates in cofactor biosynthesis; NAD(+) biosynthesis; nicotinate D-ribonucleotide from nicotinate: step 1/1. In terms of biological role, catalyzes the synthesis of beta-nicotinate D-ribonucleotide from nicotinate and 5-phospho-D-ribose 1-phosphate at the expense of ATP. The sequence is that of Nicotinate phosphoribosyltransferase from Pseudomonas putida (strain GB-1).